The chain runs to 322 residues: ADP,ATP carrier protein (322 aa).

Solcar repeat units lie at residues 25 to 118, 130 to 222, and 230 to 316; these read STFF…FKKM, KWFA…LKPV, and GNFL…VQLL. Transmembrane regions (helical) follow at residues 27–54, 95–119, 128–148, 198–219, and 233–253; these read FFFDFMMGGVSAAVSKTAAAPIERVKLL, TANVLRYFPTQALNFAFKDKFKKMF, YAKWFAGNLASGGAAGAASLL, FGPSVVGIVVYRGLYFGMYDTL, and LASFLLGWAVTTGSGVASYPL. The ADP site is built by Arg-100 and Lys-112. Arg-257 contributes to the ADP binding site. The important for transport activity stretch occupies residues 257-262; sequence RRRMMM. A Nucleotide carrier signature motif motif is present at residues 257-262; that stretch reads RRRMMM. The helical transmembrane segment at 293-313 threads the bilayer; sequence AGANILRGVAGAGVLSIYDQV.

Belongs to the mitochondrial carrier (TC 2.A.29) family. In terms of assembly, monomer.

The protein resides in the mitochondrion inner membrane. The catalysed reaction is ADP(in) + ATP(out) = ADP(out) + ATP(in). The matrix-open state (m-state) is inhibited by the membrane-permeable bongkrekic acid (BKA). The cytoplasmic-open state (c-state) is inhibited by the membrane-impermeable toxic inhibitor carboxyatractyloside (CATR). ADP:ATP antiporter that mediates import of ADP into the mitochondrial matrix for ATP synthesis, and export of ATP out to fuel the cell. Cycles between the cytoplasmic-open state (c-state) and the matrix-open state (m-state): operates by the alternating access mechanism with a single substrate-binding site intermittently exposed to either the cytosolic (c-state) or matrix (m-state) side of the inner mitochondrial membrane. This is ADP,ATP carrier protein (anc1) from Schizosaccharomyces pombe (strain 972 / ATCC 24843) (Fission yeast).